The sequence spans 443 residues: Xaa-Pro dipeptidase (443 aa).

Residues D241, D252, H333, E378, and E417 each contribute to the Mn(2+) site.

The protein belongs to the peptidase M24B family. Bacterial-type prolidase subfamily. Mn(2+) serves as cofactor.

The enzyme catalyses Xaa-L-Pro dipeptide + H2O = an L-alpha-amino acid + L-proline. In terms of biological role, splits dipeptides with a prolyl residue in the C-terminal position. In Actinobacillus pleuropneumoniae serotype 5b (strain L20), this protein is Xaa-Pro dipeptidase.